A 126-amino-acid chain; its full sequence is Glycine cleavage system H protein (126 aa).

The Lipoyl-binding domain maps to 24–106 (TVTVGITDHA…YGEGWMYRIK (83 aa)). Residue lysine 65 is modified to N6-lipoyllysine.

This sequence belongs to the GcvH family. As to quaternary structure, the glycine cleavage system is composed of four proteins: P, T, L and H. Requires (R)-lipoate as cofactor.

The glycine cleavage system catalyzes the degradation of glycine. The H protein shuttles the methylamine group of glycine from the P protein to the T protein. The protein is Glycine cleavage system H protein of Psychrobacter sp. (strain PRwf-1).